The sequence spans 554 residues: Malate synthase 1 (554 aa).

Catalysis depends on Arg-177, which acts as the Proton acceptor. The Proton donor role is filled by Asp-457. Residues 552–554 (SKL) carry the SKL peroxisome targeting motif motif.

Belongs to the malate synthase family. Interacts with PEX9.

It is found in the peroxisome matrix. It catalyses the reaction glyoxylate + acetyl-CoA + H2O = (S)-malate + CoA + H(+). It participates in carbohydrate metabolism; glyoxylate cycle; (S)-malate from isocitrate: step 2/2. In terms of biological role, malate synthase which takes part in the glyoxylate cycle. MLS1 activity is essential for cells to grow on oleic acid as a sole carbon source. Two steps of the glyoxylate cycle take place in the cytosol, the splitting of isocitrate into succinate and glyoxylate, and the dehydrogenation of malate to oxaloacetate. However, the formation of malate from glyoxylate and acetyl-CoA undertaken MLS1, occurs in the peroxisomes when cells are grown on oleic acid. The source of acetyl-CoA being either peroxisomal when breaking down fatty acids, or cytosolic when extra-cellular two-carbon substrates are used, therefore, although not strictly essential, the peroxisomal localization of MLS1 appears to be advantageous for cells growing on oleic acid, in that acetyl-CoA production and utilization are thereby intimately compartmentalized together to increase efficiency. In Saccharomyces cerevisiae (strain ATCC 204508 / S288c) (Baker's yeast), this protein is Malate synthase 1.